The chain runs to 86 residues: Large ribosomal subunit protein bL27 (86 aa).

This sequence belongs to the bacterial ribosomal protein bL27 family.

This is Large ribosomal subunit protein bL27 from Flavobacterium johnsoniae (strain ATCC 17061 / DSM 2064 / JCM 8514 / BCRC 14874 / CCUG 350202 / NBRC 14942 / NCIMB 11054 / UW101) (Cytophaga johnsonae).